The primary structure comprises 281 residues: MDRYAVVGNPIAHSKSPQIHAAFAHQTGEALGYEAILAPLDGFVDTVLAFRAVGGRGMNVTVPFKLEAHALATRLTPRAAAAGAVNTLAFGGPETPDDILGDNTDGAGLVRDLTVNLGCPLHGRRVLLLGAGGAARGALLPLLEQAPAALTIANRTAAKAVELAAGFAAGHPGVAIDGGGFDALAGRRFDVVINATAASLADQAPPLPAGIYAEGALAYDMMYGRGDTPFLAAARADGAGRLADGLGMLVEQAAESFLLWRGVRPDTAPVLADLRARLAAA.

Residues 14–16 (SKS) and Thr61 contribute to the shikimate site. The active-site Proton acceptor is Lys65. Shikimate contacts are provided by Asn86 and Asp105. NADP(+)-binding positions include 130–134 (GAGGA), 154–159 (NRTAAK), and Met221. Tyr223 contacts shikimate. An NADP(+)-binding site is contributed by Gly245.

It belongs to the shikimate dehydrogenase family. Homodimer.

It catalyses the reaction shikimate + NADP(+) = 3-dehydroshikimate + NADPH + H(+). The protein operates within metabolic intermediate biosynthesis; chorismate biosynthesis; chorismate from D-erythrose 4-phosphate and phosphoenolpyruvate: step 4/7. Functionally, involved in the biosynthesis of the chorismate, which leads to the biosynthesis of aromatic amino acids. Catalyzes the reversible NADPH linked reduction of 3-dehydroshikimate (DHSA) to yield shikimate (SA). The polypeptide is Shikimate dehydrogenase (NADP(+)) (Azoarcus sp. (strain BH72)).